The primary structure comprises 331 residues: Ketol-acid reductoisomerase (NADP(+)) (331 aa).

In terms of domain architecture, KARI N-terminal Rossmann spans 2 to 182 (AQLFYDSDAD…GGTRAGILET (181 aa)). Residues 25-28 (YGSQ), S51, S53, and 83-86 (DEFQ) each bind NADP(+). H108 is a catalytic residue. G134 provides a ligand contact to NADP(+). In terms of domain architecture, KARI C-terminal knotted spans 183–328 (NFKEETETDL…KGLRSMFSWL (146 aa)). D191, E195, E227, and E231 together coordinate Mg(2+). Position 252 (S252) interacts with substrate.

The protein belongs to the ketol-acid reductoisomerase family. Mg(2+) is required as a cofactor.

It carries out the reaction (2R)-2,3-dihydroxy-3-methylbutanoate + NADP(+) = (2S)-2-acetolactate + NADPH + H(+). It catalyses the reaction (2R,3R)-2,3-dihydroxy-3-methylpentanoate + NADP(+) = (S)-2-ethyl-2-hydroxy-3-oxobutanoate + NADPH + H(+). It participates in amino-acid biosynthesis; L-isoleucine biosynthesis; L-isoleucine from 2-oxobutanoate: step 2/4. Its pathway is amino-acid biosynthesis; L-valine biosynthesis; L-valine from pyruvate: step 2/4. Functionally, involved in the biosynthesis of branched-chain amino acids (BCAA). Catalyzes an alkyl-migration followed by a ketol-acid reduction of (S)-2-acetolactate (S2AL) to yield (R)-2,3-dihydroxy-isovalerate. In the isomerase reaction, S2AL is rearranged via a Mg-dependent methyl migration to produce 3-hydroxy-3-methyl-2-ketobutyrate (HMKB). In the reductase reaction, this 2-ketoacid undergoes a metal-dependent reduction by NADPH to yield (R)-2,3-dihydroxy-isovalerate. In Synechococcus sp. (strain CC9605), this protein is Ketol-acid reductoisomerase (NADP(+)).